The sequence spans 78 residues: Acyl carrier protein (78 aa).

One can recognise a Carrier domain in the interval 2-77 (STIEESVKSI…AAIDFIKESK (76 aa)). Ser-37 is subject to O-(pantetheine 4'-phosphoryl)serine.

This sequence belongs to the acyl carrier protein (ACP) family. 4'-phosphopantetheine is transferred from CoA to a specific serine of apo-ACP by AcpS. This modification is essential for activity because fatty acids are bound in thioester linkage to the sulfhydryl of the prosthetic group.

It localises to the cytoplasm. It functions in the pathway lipid metabolism; fatty acid biosynthesis. Functionally, carrier of the growing fatty acid chain in fatty acid biosynthesis. This chain is Acyl carrier protein, found in Wigglesworthia glossinidia brevipalpis.